A 125-amino-acid chain; its full sequence is Cysteine proteinase inhibitor 3 (125 aa).

An N-terminal signal peptide occupies residues 1–22; sequence MESKTFWIVTLLLCGTIQLAIC. The 89-residue stretch at 36 to 124 folds into the Cystatin domain; that stretch reads GGVHDLRGNQ…KQLQEFKESS (89 aa). The short motif at 80–84 is the Secondary area of contact element; that stretch reads QVVAG.

This sequence belongs to the cystatin family. Phytocystatin subfamily.

The protein localises to the secreted. Its function is as follows. Specific inhibitor of cysteine proteinases. Probably involved in the regulation of endogenous processes and in defense against pests and pathogens. The protein is Cysteine proteinase inhibitor 3 (CYS3) of Arabidopsis thaliana (Mouse-ear cress).